The chain runs to 77 residues: Large ribosomal subunit protein uL29 (77 aa).

The protein belongs to the universal ribosomal protein uL29 family.

The chain is Large ribosomal subunit protein uL29 from Cutibacterium acnes (strain DSM 16379 / KPA171202) (Propionibacterium acnes).